Reading from the N-terminus, the 130-residue chain is Small ribosomal subunit protein uS11 (130 aa).

It belongs to the universal ribosomal protein uS11 family. Part of the 30S ribosomal subunit. Interacts with proteins S7 and S18. Binds to IF-3.

In terms of biological role, located on the platform of the 30S subunit, it bridges several disparate RNA helices of the 16S rRNA. Forms part of the Shine-Dalgarno cleft in the 70S ribosome. This is Small ribosomal subunit protein uS11 from Nitratiruptor sp. (strain SB155-2).